Reading from the N-terminus, the 664-residue chain is Serine/threonine-protein kinase PknD (664 aa).

The Cytoplasmic segment spans residues 1-381 (MSDAVPQVGS…PAGNKRKVWA (381 aa)). The region spanning 15–276 (YQLLRLLGRG…DLAIAAHDAL (262 aa)) is the Protein kinase domain. ATP contacts are provided by residues 21-29 (LGRGGMGEV) and Lys-44. At Thr-135 the chain carries Phosphothreonine; by autocatalysis. Catalysis depends on Asp-138, which acts as the Proton acceptor. Thr-169, Thr-171, Thr-173, and Thr-209 each carry phosphothreonine; by autocatalysis. The segment at 303–333 (TGLSQSESGIAGAGTGPPTPGAARWSPGDSA) is disordered. The helical transmembrane segment at 382–402 (VVGAAAIVLVAIVAAAGYLVL) threads the bilayer. Topologically, residues 403–664 (RPSWSPTQAS…GNDRVVKLTS (262 aa)) are extracellular. NHL repeat units follow at residues 414–456 (QTVL…LATG), 457–497 (STGT…LAAG), 498–539 (SNNQ…LAAG), 540–581 (SKTQ…LEAE), 582–623 (SNNQ…LLAG), and 624–664 (STTS…KLTS).

This sequence belongs to the protein kinase superfamily. Ser/Thr protein kinase family. Homodimer. The extracellular domain interacts with host laminin. Post-translationally, autophosphorylated. Dephosphorylated by PstP.

It is found in the cell membrane. It carries out the reaction L-seryl-[protein] + ATP = O-phospho-L-seryl-[protein] + ADP + H(+). It catalyses the reaction L-threonyl-[protein] + ATP = O-phospho-L-threonyl-[protein] + ADP + H(+). With respect to regulation, dimerization activates the kinase domain of unphosphorylated PknD via an allosteric mechanism, triggering autophosphorylation and phosphorylation of target proteins. Phosphorylated PknD is fully active even in the absence of dimerization. Functionally, part of a signaling pathway that enables adaptation to osmotic stress through cell wall remodeling and virulence factor production. Its function is as follows. Key microbial factor required for central nervous system tuberculosis. Required for invasion of host brain endothelia, but not macrophages, lung epithelia or other endothelia. This is Serine/threonine-protein kinase PknD (pknD) from Mycobacterium tuberculosis (strain CDC 1551 / Oshkosh).